A 406-amino-acid polypeptide reads, in one-letter code: Tryptophan synthase beta chain (406 aa).

K99 carries the N6-(pyridoxal phosphate)lysine modification.

Belongs to the TrpB family. As to quaternary structure, tetramer of two alpha and two beta chains. It depends on pyridoxal 5'-phosphate as a cofactor.

It carries out the reaction (1S,2R)-1-C-(indol-3-yl)glycerol 3-phosphate + L-serine = D-glyceraldehyde 3-phosphate + L-tryptophan + H2O. It functions in the pathway amino-acid biosynthesis; L-tryptophan biosynthesis; L-tryptophan from chorismate: step 5/5. In terms of biological role, the beta subunit is responsible for the synthesis of L-tryptophan from indole and L-serine. The protein is Tryptophan synthase beta chain of Sinorhizobium fredii (strain NBRC 101917 / NGR234).